Consider the following 231-residue polypeptide: Ribonuclease HII (231 aa).

One can recognise an RNase H type-2 domain in the interval 23-214 (GPVAGVDEAG…VAKAHREWAL (192 aa)). A divalent metal cation contacts are provided by aspartate 29, glutamate 30, and aspartate 123.

The protein belongs to the RNase HII family. The cofactor is Mn(2+). Mg(2+) serves as cofactor.

It localises to the cytoplasm. The catalysed reaction is Endonucleolytic cleavage to 5'-phosphomonoester.. Its function is as follows. Endonuclease that specifically degrades the RNA of RNA-DNA hybrids. The polypeptide is Ribonuclease HII (Corynebacterium efficiens (strain DSM 44549 / YS-314 / AJ 12310 / JCM 11189 / NBRC 100395)).